Here is a 426-residue protein sequence, read N- to C-terminus: Histone-binding protein RBBP7 (426 aa).

Alanine 2 is modified (N-acetylalanine). Serine 3 is subject to Phosphoserine. The residue at position 4 (lysine 4) is an N6-acetyllysine; alternate. Lysine 4 participates in a covalent cross-link: Glycyl lysine isopeptide (Lys-Gly) (interchain with G-Cter in SUMO2); alternate. Lysine 4 participates in a covalent cross-link: Glycyl lysine isopeptide (Lys-Gly) (interchain with G-Cter in ubiquitin); alternate. Threonine 10 bears the Phosphothreonine mark. 7 WD repeats span residues 47 to 122 (QWLP…KINH), 128 to 173 (RARY…LRLR), 181 to 217 (GLSWNSNLSGHLLSASDDHTVCLWDINAGPKEGKIVD), 228 to 269 (VVED…HLVD), 275 to 312 (VNCLSFNPYSEFILATGSADKTVALWDLRNLKLKLHTF), 318 to 370 (EIFQ…LFIH), and 377 to 404 (ISDFSWNPNEPWVICSVSEDNIMQIWQM). The residue at position 95 (serine 95) is a Phosphoserine. Residue lysine 101 forms a Glycyl lysine isopeptide (Lys-Gly) (interchain with G-Cter in SUMO2) linkage. N6-acetyllysine is present on lysine 119. Lysine 155 is covalently cross-linked (Glycyl lysine isopeptide (Lys-Gly) (interchain with G-Cter in SUMO2)). The residue at position 159 (lysine 159) is an N6-acetyllysine; alternate. A Glycyl lysine isopeptide (Lys-Gly) (interchain with G-Cter in SUMO2); alternate cross-link involves residue lysine 159. Serine 355 is subject to Phosphoserine.

The protein belongs to the WD repeat RBAP46/RBAP48/MSI1 family. Binds directly to helix 1 of the histone fold of histone H4, a region that is not accessible when H4 is in chromatin. Subunit of the type B histone acetyltransferase (HAT) complex, composed of RBBP7 and HAT1. Subunit of the core histone deacetylase (HDAC) complex, which is composed of HDAC1, HDAC2, RBBP4 and RBBP7. The core HDAC complex associates with SIN3A, ARID4B/SAP180, SAP18, SAP30, SAP130, SUDS3/SAP45 and possibly ARID4A/RBP1 and ING1 to form the SIN3 HDAC complex. Component of the nucleosome remodeling and deacetylase (NuRD) repressor complex, composed of core proteins MTA1, MTA2, MTA3, RBBP4, RBBP7, HDAC1, HDAC2, MBD2, MBD3, and peripherally associated proteins CDK2AP1, CDK2AP2, GATAD2A, GATAD2B, CHD3, CHD4 and CHD5. The exact stoichiometry of the NuRD complex is unknown, and some subunits such as MBD2 and MBD3, GATAD2A and GATAD2B, and CHD3, CHD4 and CHD5 define mutually exclusive NuRD complexes. The NuRD complex may interact with MBD3L1. The NuRD complex may interact with MBD3L2. Subunit of the PRC2/EED-EZH2 complex, which is composed of at least EED, EZH2, RBBP4, RBBP7 and SUZ12. The PRC2/EED-EZH2 complex may also associate with HDAC1. Component of the NURF-1 ISWI chromatin remodeling complex (also called the nucleosome-remodeling factor (NURF) complex) at least composed of SMARCA1, BPTF, RBBP4 and RBBP7. Within the complex interacts with SMARCA1. Component of the BPFT-SMARCA1 complex at least composed of SMARCA1, BPFT, RBBP4 and RBBP7; the complex is catalytically inactive and does not remodel chromatin. Within the complex interacts with SMARCA1. Interacts with BRCA1. Interacts with CDK2AP1. Interacts with CENPA. Interacts with CHD3. Interacts with CHD4. Interacts with CREBBP, and this interaction may be enhanced by the binding of phosphorylated CREB1 to CREBBP. Interacts with HDAC7. Interacts with MTA1. Interacts with PWWP2B. Interacts with RB1 (via viral protein-binding domain). Interacts with SUV39H1.

The protein localises to the nucleus. Functionally, core histone-binding subunit that may target chromatin remodeling factors, histone acetyltransferases and histone deacetylases to their histone substrates in a manner that is regulated by nucleosomal DNA. Component of several complexes which regulate chromatin metabolism. These include the type B histone acetyltransferase (HAT) complex, which is required for chromatin assembly following DNA replication; the core histone deacetylase (HDAC) complex, which promotes histone deacetylation and consequent transcriptional repression; the nucleosome remodeling and histone deacetylase complex (the NuRD complex), which promotes transcriptional repression by histone deacetylation and nucleosome remodeling; and the PRC2/EED-EZH2 complex, which promotes repression of homeotic genes during development; and the NURF (nucleosome remodeling factor) complex. This is Histone-binding protein RBBP7 (RBBP7) from Pongo abelii (Sumatran orangutan).